The chain runs to 213 residues: Thiopurine S-methyltransferase (213 aa).

Residues Trp10, Leu45, Glu66, and Arg121 each contribute to the S-adenosyl-L-methionine site.

It belongs to the class I-like SAM-binding methyltransferase superfamily. TPMT family.

Its subcellular location is the cytoplasm. The enzyme catalyses S-adenosyl-L-methionine + a thiopurine = S-adenosyl-L-homocysteine + a thiopurine S-methylether.. The sequence is that of Thiopurine S-methyltransferase from Aliivibrio fischeri (strain MJ11) (Vibrio fischeri).